The sequence spans 547 residues: Chaperonin GroEL (547 aa).

ATP contacts are provided by residues 30–33 (TLGP), Lys51, 87–91 (DGTTT), Gly415, 479–481 (NAA), and Asp495.

This sequence belongs to the chaperonin (HSP60) family. In terms of assembly, forms a cylinder of 14 subunits composed of two heptameric rings stacked back-to-back. Interacts with the co-chaperonin GroES.

The protein localises to the cytoplasm. The enzyme catalyses ATP + H2O + a folded polypeptide = ADP + phosphate + an unfolded polypeptide.. Together with its co-chaperonin GroES, plays an essential role in assisting protein folding. The GroEL-GroES system forms a nano-cage that allows encapsulation of the non-native substrate proteins and provides a physical environment optimized to promote and accelerate protein folding. The protein is Chaperonin GroEL of Polynucleobacter necessarius subsp. necessarius (strain STIR1).